A 485-amino-acid chain; its full sequence is Glutamyl-tRNA(Gln) amidotransferase subunit A (485 aa).

Residues Lys-79 and Ser-154 each act as charge relay system in the active site. The active-site Acyl-ester intermediate is the Ser-178.

Belongs to the amidase family. GatA subfamily. In terms of assembly, heterotrimer of A, B and C subunits.

It catalyses the reaction L-glutamyl-tRNA(Gln) + L-glutamine + ATP + H2O = L-glutaminyl-tRNA(Gln) + L-glutamate + ADP + phosphate + H(+). Its function is as follows. Allows the formation of correctly charged Gln-tRNA(Gln) through the transamidation of misacylated Glu-tRNA(Gln) in organisms which lack glutaminyl-tRNA synthetase. The reaction takes place in the presence of glutamine and ATP through an activated gamma-phospho-Glu-tRNA(Gln). The protein is Glutamyl-tRNA(Gln) amidotransferase subunit A of Staphylococcus epidermidis (strain ATCC 12228 / FDA PCI 1200).